The chain runs to 203 residues: Imidazoleglycerol-phosphate dehydratase (203 aa).

The protein belongs to the imidazoleglycerol-phosphate dehydratase family.

It localises to the cytoplasm. The catalysed reaction is D-erythro-1-(imidazol-4-yl)glycerol 3-phosphate = 3-(imidazol-4-yl)-2-oxopropyl phosphate + H2O. Its pathway is amino-acid biosynthesis; L-histidine biosynthesis; L-histidine from 5-phospho-alpha-D-ribose 1-diphosphate: step 6/9. The chain is Imidazoleglycerol-phosphate dehydratase from Salinispora arenicola (strain CNS-205).